The following is a 597-amino-acid chain: UvrABC system protein C (597 aa).

Residues Asp15–Val93 enclose the GIY-YIG domain. One can recognise a UVR domain in the interval Lys207 to Tyr242.

This sequence belongs to the UvrC family. Interacts with UvrB in an incision complex.

The protein resides in the cytoplasm. Its function is as follows. The UvrABC repair system catalyzes the recognition and processing of DNA lesions. UvrC both incises the 5' and 3' sides of the lesion. The N-terminal half is responsible for the 3' incision and the C-terminal half is responsible for the 5' incision. The protein is UvrABC system protein C of Flavobacterium johnsoniae (strain ATCC 17061 / DSM 2064 / JCM 8514 / BCRC 14874 / CCUG 350202 / NBRC 14942 / NCIMB 11054 / UW101) (Cytophaga johnsonae).